Reading from the N-terminus, the 1465-residue chain is DNA polymerase III PolC-type (1465 aa).

Residues 427–583 enclose the Exonuclease domain; that stretch reads YVVFDVETTG…YDAEATGRLL (157 aa).

The protein belongs to the DNA polymerase type-C family. PolC subfamily.

It localises to the cytoplasm. It catalyses the reaction DNA(n) + a 2'-deoxyribonucleoside 5'-triphosphate = DNA(n+1) + diphosphate. In terms of biological role, required for replicative DNA synthesis. This DNA polymerase also exhibits 3' to 5' exonuclease activity. The polypeptide is DNA polymerase III PolC-type (Streptococcus pyogenes serotype M2 (strain MGAS10270)).